Consider the following 299-residue polypeptide: ATP phosphoribosyltransferase (299 aa).

It belongs to the ATP phosphoribosyltransferase family. Long subfamily. Equilibrium between an active dimeric form, an inactive hexameric form and higher aggregates. Interconversion between the various forms is largely reversible and is influenced by the natural substrates and inhibitors of the enzyme. Mg(2+) is required as a cofactor.

The protein localises to the cytoplasm. It catalyses the reaction 1-(5-phospho-beta-D-ribosyl)-ATP + diphosphate = 5-phospho-alpha-D-ribose 1-diphosphate + ATP. It functions in the pathway amino-acid biosynthesis; L-histidine biosynthesis; L-histidine from 5-phospho-alpha-D-ribose 1-diphosphate: step 1/9. Feedback inhibited by histidine. Functionally, catalyzes the condensation of ATP and 5-phosphoribose 1-diphosphate to form N'-(5'-phosphoribosyl)-ATP (PR-ATP). Has a crucial role in the pathway because the rate of histidine biosynthesis seems to be controlled primarily by regulation of HisG enzymatic activity. This Escherichia coli O7:K1 (strain IAI39 / ExPEC) protein is ATP phosphoribosyltransferase.